Reading from the N-terminus, the 352-residue chain is Methylthioribose-1-phosphate isomerase (352 aa).

Substrate is bound by residues arginine 55–alanine 57, arginine 98, and glutamine 201. Aspartate 242 (proton donor) is an active-site residue. A substrate-binding site is contributed by asparagine 252–lysine 253.

The protein belongs to the eIF-2B alpha/beta/delta subunits family. MtnA subfamily.

The catalysed reaction is 5-(methylsulfanyl)-alpha-D-ribose 1-phosphate = 5-(methylsulfanyl)-D-ribulose 1-phosphate. It functions in the pathway amino-acid biosynthesis; L-methionine biosynthesis via salvage pathway; L-methionine from S-methyl-5-thio-alpha-D-ribose 1-phosphate: step 1/6. Its function is as follows. Catalyzes the interconversion of methylthioribose-1-phosphate (MTR-1-P) into methylthioribulose-1-phosphate (MTRu-1-P). The sequence is that of Methylthioribose-1-phosphate isomerase from Methylococcus capsulatus (strain ATCC 33009 / NCIMB 11132 / Bath).